A 227-amino-acid polypeptide reads, in one-letter code: Threonine--tRNA ligase (227 aa).

Residues 1–120 (DIELKLSTRP…LIEHYEGAFP (120 aa)) are catalytic.

It belongs to the class-II aminoacyl-tRNA synthetase family. In terms of assembly, homodimer.

Its subcellular location is the cytoplasm. The enzyme catalyses tRNA(Thr) + L-threonine + ATP = L-threonyl-tRNA(Thr) + AMP + diphosphate + H(+). In terms of biological role, catalyzes the attachment of threonine to tRNA(Thr) in a two-step reaction: L-threonine is first activated by ATP to form Thr-AMP and then transferred to the acceptor end of tRNA(Thr). Also edits incorrectly charged L-seryl-tRNA(Thr). The chain is Threonine--tRNA ligase from Pseudomonas syringae pv. syringae.